Consider the following 222-residue polypeptide: Translation initiation factor 6 (222 aa).

Belongs to the eIF-6 family.

In terms of biological role, binds to the 50S ribosomal subunit and prevents its association with the 30S ribosomal subunit to form the 70S initiation complex. The chain is Translation initiation factor 6 from Methanocorpusculum labreanum (strain ATCC 43576 / DSM 4855 / Z).